The primary structure comprises 818 residues: Cation/H(+) antiporter 6A (818 aa).

The next 13 helical transmembrane spans lie at 51 to 71, 88 to 110, 123 to 143, 156 to 176, 192 to 212, 222 to 242, 248 to 268, 288 to 308, 310 to 330, 340 to 360, 376 to 396, 409 to 429, and 438 to 458; these read NFWE…FFIW, FTYM…KSWI, VAET…GVTM, SVIG…TFRY, LIIF…LKDL, IALS…FFNA, LYGF…ICVV, FYLY…NKVI, LFGP…YPLG, FNLG…VDLL, IYEV…VTTI, FALA…YTYA, and EVFT…PMLL.

The protein belongs to the monovalent cation:proton antiporter 2 (CPA2) transporter (TC 2.A.37) family. CHX (TC 2.A.37.4) subfamily. In terms of tissue distribution, preferentially expressed in pollen.

Its subcellular location is the membrane. In terms of biological role, may operate as a cation/H(+) antiporter. The protein is Cation/H(+) antiporter 6A (CHX6a) of Arabidopsis thaliana (Mouse-ear cress).